The chain runs to 513 residues: Flavonoid 3'-monooxygenase (513 aa).

The chain crosses the membrane as a helical span at residues 1 to 21 (MATLFLTILLATVLFLILRIF). The Cytoplasmic segment spans residues 22–513 (SHRRNRSHNN…APNVYGLGSG (492 aa)). Cys-445 contributes to the heme binding site.

Belongs to the cytochrome P450 family. Requires heme as cofactor. In terms of tissue distribution, high expression in siliques and to a lower extent in stems, flowers and senescing leaves.

The protein localises to the endoplasmic reticulum membrane. It catalyses the reaction a 3'-unsubstituted flavone + reduced [NADPH--hemoprotein reductase] + O2 = a 3'-hydroxyflavone + oxidized [NADPH--hemoprotein reductase] + H2O + H(+). It participates in secondary metabolite biosynthesis; flavonoid biosynthesis. In terms of biological role, catalyzes the 3'-hydroxylation of the flavonoid B-ring to the 3',4'-hydroxylated state. Convert naringenin to eriodictyol and dihydrokaempferol to dihydroquercetin. The sequence is that of Flavonoid 3'-monooxygenase (CYP75B1) from Arabidopsis thaliana (Mouse-ear cress).